A 216-amino-acid polypeptide reads, in one-letter code: Probable GTP-binding protein EngB (216 aa).

The EngB-type G domain occupies 30–204 (DGLEVAFAGR…HDVLARWLGL (175 aa)). GTP is bound by residues 38-45 (GRSNAGKS), 64-68 (GRTQL), 82-85 (DLPG), 149-152 (TKAD), and 182-185 (LFSA). Residues Ser45 and Thr66 each coordinate Mg(2+).

Belongs to the TRAFAC class TrmE-Era-EngA-EngB-Septin-like GTPase superfamily. EngB GTPase family. The cofactor is Mg(2+).

Functionally, necessary for normal cell division and for the maintenance of normal septation. This Azotobacter vinelandii (strain DJ / ATCC BAA-1303) protein is Probable GTP-binding protein EngB.